The primary structure comprises 257 residues: Thioredoxin-dependent peroxide reductase, mitochondrial (257 aa).

A mitochondrion-targeting transit peptide spans Met-1–His-62. In terms of domain architecture, Thioredoxin spans Pro-64–Phe-222. Lys-84 carries the N6-succinyllysine modification. Lys-92 is subject to N6-acetyllysine; alternate. The residue at position 92 (Lys-92) is an N6-succinyllysine; alternate. Cys-109 functions as the Cysteine sulfenic acid (-SOH) intermediate in the catalytic mechanism. A Phosphothreonine modification is found at Thr-147.

It belongs to the peroxiredoxin family. AhpC/Prx1 subfamily. As to quaternary structure, homodimer; disulfide-linked, upon oxidation. 6 homodimers assemble to form a ring-like dodecamer. Interacts with NEK6. Interacts with LRRK2. Interacts with MAP3K13. Interacts with RPS6KC1 (via PX domain). Phosphorylated by LRRK2; phosphorylation reduces perodixase activity. In terms of processing, the enzyme can be inactivated by further oxidation of the cysteine sulfenic acid (C(P)-SOH) to sulphinic acid (C(P)-SO2H) and sulphonic acid (C(P)-SO3H) instead of its condensation to a disulfide bond. Post-translationally, S-palmitoylated. In terms of tissue distribution, ubiquitous.

It localises to the mitochondrion. It is found in the cytoplasm. The protein localises to the early endosome. It catalyses the reaction a hydroperoxide + [thioredoxin]-dithiol = an alcohol + [thioredoxin]-disulfide + H2O. Functionally, thiol-specific peroxidase that catalyzes the reduction of hydrogen peroxide and organic hydroperoxides to water and alcohols, respectively. Plays a role in cell protection against oxidative stress by detoxifying peroxides. Acts synergistically with MAP3K13 to regulate the activation of NF-kappa-B in the cytosol. Required for the maintenance of physical strength. The chain is Thioredoxin-dependent peroxide reductase, mitochondrial (Prdx3) from Rattus norvegicus (Rat).